Here is a 161-residue protein sequence, read N- to C-terminus: Phosphopantetheine adenylyltransferase (161 aa).

It belongs to the eukaryotic CoaD family.

It localises to the cytoplasm. The enzyme catalyses (R)-4'-phosphopantetheine + ATP + H(+) = 3'-dephospho-CoA + diphosphate. The protein operates within cofactor biosynthesis; coenzyme A biosynthesis. In terms of biological role, reversibly transfers an adenylyl group from ATP to 4'-phosphopantetheine, yielding dephospho-CoA (dPCoA) and pyrophosphate. The polypeptide is Phosphopantetheine adenylyltransferase (Methanosarcina barkeri (strain Fusaro / DSM 804)).